Reading from the N-terminus, the 76-residue chain is RNA-binding protein KhpA (76 aa).

Residues 29–76 (QNIIELRVSPKDVGKVIGKNGRIAKSLRAILTAASVKAGKNFSLEIID) form the KH domain.

The protein belongs to the KhpA RNA-binding protein family. As to quaternary structure, forms a complex with KhpB.

The protein localises to the cytoplasm. Functionally, a probable RNA chaperone. Forms a complex with KhpB which binds to cellular RNA and controls its expression. Plays a role in peptidoglycan (PG) homeostasis and cell length regulation. This chain is RNA-binding protein KhpA, found in Leptospira interrogans serogroup Icterohaemorrhagiae serovar copenhageni (strain Fiocruz L1-130).